A 164-amino-acid chain; its full sequence is Urease subunit beta (164 aa).

2 stretches are compositionally biased toward polar residues: residues Met-1–Ala-10 and Thr-20–Tyr-30. The interval Met-1–Tyr-30 is disordered.

Belongs to the urease beta subunit family. As to quaternary structure, heterotrimer of UreA (gamma), UreB (beta) and UreC (alpha) subunits. Three heterotrimers associate to form the active enzyme.

The protein resides in the cytoplasm. The enzyme catalyses urea + 2 H2O + H(+) = hydrogencarbonate + 2 NH4(+). Its pathway is nitrogen metabolism; urea degradation; CO(2) and NH(3) from urea (urease route): step 1/1. Expression of the urease operon increases the likelihood of bacterial survival by contributing to acid resistance in vitro and in vivo in BALB/c mice. Y.enterocolitica enters the body via an oral path and must survive the acidic stomach before being able to colonize the intestinal mucosa. This Yersinia enterocolitica protein is Urease subunit beta.